A 193-amino-acid chain; its full sequence is uncharacterized protein (193 aa).

Disordered stretches follow at residues 1-21, 53-96, and 114-136; these read MPKG…APPL, GAPA…PWPS, and SGPE…ASAS. A compositionally biased stretch (low complexity) spans 53–70; sequence GAPAGGAPAAGGRSLPQG. Positions 71 to 95 are enriched in pro residues; sequence PSAPAPPPPPGLGPPSERPCPPPWP. A compositionally biased stretch (low complexity) spans 116–127; that stretch reads PEAAASPLAPGP.

This is an uncharacterized protein from Bos taurus (Bovine).